The following is a 320-amino-acid chain: Malate dehydrogenase (320 aa).

Residues 10 to 15 (GAGMIG) and Asp-34 each bind NAD(+). Substrate contacts are provided by Arg-83 and Arg-89. Residues Asn-96 and 119–121 (ITN) contribute to the NAD(+) site. Asn-121 and Arg-152 together coordinate substrate. The active-site Proton acceptor is the His-176.

The protein belongs to the LDH/MDH superfamily. MDH type 3 family.

It catalyses the reaction (S)-malate + NAD(+) = oxaloacetate + NADH + H(+). Its function is as follows. Catalyzes the reversible oxidation of malate to oxaloacetate. The sequence is that of Malate dehydrogenase from Caulobacter vibrioides (strain NA1000 / CB15N) (Caulobacter crescentus).